Consider the following 1499-residue polypeptide: Pleiotropic ABC efflux transporter of multiple drugs CDR1 (1499 aa).

Positions 1–11 (MSLASDKKDAD) are enriched in basic and acidic residues. The segment at 1–29 (MSLASDKKDADVASTTTTAQDDDNLSTYH) is disordered. Asn24, Asn96, and Asn99 each carry an N-linked (GlcNAc...) asparagine glycan. Residues 146–399 (VYNTVVPSTA…FQKMGYVSPE (254 aa)) enclose the ABC transporter 1 domain. The residue at position 307 (Ser307) is a Phosphoserine. An N-linked (GlcNAc...) asparagine glycan is attached at Asn323. Position 484 is a phosphoserine (Ser484). A helical transmembrane segment spans residues 510-530 (GVTLFMVIGNSSMAFILGSMF). Asn537 carries N-linked (GlcNAc...) asparagine glycosylation. 5 helical membrane-spanning segments follow: residues 548-568 (AMFF…FSLF), 597-617 (VPAK…LVNF), 622-642 (GVFF…SHLF), 654-674 (AAMV…GFAI), and 763-783 (GFGI…ILCE). Residue Asn813 is glycosylated (N-linked (GlcNAc...) asparagine). The ABC transporter 2 domain maps to 857–1099 (FHWRNLCYDV…TMIDYFESHG (243 aa)). 893-900 (GASGAGKT) lines the ATP pocket. Asn1159 carries an N-linked (GlcNAc...) asparagine glycan. Transmembrane regions (helical) follow at residues 1193–1213 (YLWS…FTFF), 1228–1248 (AVFM…PSFV), and 1278–1298 (IPWN…AIGF). The N-linked (GlcNAc...) asparagine glycan is linked to Asn1301. The next 2 membrane-spanning stretches (helical) occupy residues 1314–1334 (LFWL…LFCI) and 1342–1362 (AAAN…GVLV). The N-linked (GlcNAc...) asparagine glycan is linked to Asn1412. Residues 1466–1486 (WGIFICYIAFNYIAGIFLYWL) traverse the membrane as a helical segment.

The protein belongs to the ABC transporter superfamily. Phosphorylated at Ser-307 and Ser-484. Ser-307 and Ser-484 are dephosphorylated on glucose depletion and independently rephosphorylated during glucose exposure or under stress.

The protein resides in the cell membrane. With respect to regulation, inhibited by clorgyline. Inhibited by RC21v3, a 4-methoxy-2,3,6-trimethylbenzenesulphonyl derivative of the D-octapeptide D-FFKWQRRR, via the interaction with the ectodomain. FK506, enniatin, milbemycin alpha-11, and milbemycin beta-9 also inhibit CDR1 activity. Inhibited by milbemycin A3/A4 oxim derivatives. Pleiotropic ABC efflux transporter that transports and confers resistance to structurally and functionally unrelated compounds including rhodamine 6G, Nile red, caspofungin, cycloheximide, or azoles such as fluconazole, itraconazole, ketoconazole, posaconazole, voriconazole, and isavuconazole. Chlorbromuron, itraconazole, yohimbine, ketoconazole, miconazole, clotrimazole, DE-11, tamoxifen, quinidine, verapamil can compete for rhodamine 6G's binding site(s) while compounds such as propanil, chloramphenicol, benomyl, voriconazole, tritylimidazole, ketoconazole, miconazole, tamoxifen, gefitinib shared binding site(s) with fluconazole. Nile red mediated efflux appears to be relatively more specific since only five compounds such as ZW3-12, rhodamine 123, miconazole, clotrimazole, and itraconazole can inhibit its accumulation. Does not use as substrates 4-nitroquinoline 1-oxide (4-NQO) and disulfiram. Does not play a role in the azole resistance in mature biofilms. This is Pleiotropic ABC efflux transporter of multiple drugs CDR1 from Candida glabrata (strain ATCC 2001 / BCRC 20586 / JCM 3761 / NBRC 0622 / NRRL Y-65 / CBS 138) (Yeast).